A 205-amino-acid polypeptide reads, in one-letter code: Non-specific lipid transfer protein GPI-anchored 21 (205 aa).

The first 27 residues, M1–A27, serve as a signal peptide directing secretion. Cystine bridges form between C33–C75, C44–C59, C60–C100, and C73–C109. Residue N89 is glycosylated (N-linked (GlcNAc...) asparagine). The tract at residues L116–P182 is disordered. Residues P126–P156 show a composition bias toward low complexity. S179 carries GPI-anchor amidated serine lipidation. The propeptide at S180–I205 is removed in mature form.

Belongs to the plant LTP family.

The protein resides in the cell membrane. In terms of biological role, probable lipid transfer protein. The chain is Non-specific lipid transfer protein GPI-anchored 21 from Arabidopsis thaliana (Mouse-ear cress).